Reading from the N-terminus, the 376-residue chain is MKNTSGHREPRTRPRERDPDRRPHPDRDHHVERSRDRGGDRHRERNGDVRGNGDRRAGREQRTDRDQRQDRHRDAGHRASEQRALEKSRQSRARPEPWGPSWDAAPTPGPAPWGPRELSQKHGLGRRGLESERASERYVPTYSVPALQEEEYYQSEAEGLLDCHKCRYLCTGRACWQMLKALLNLLILACSSVSYNSTGGYTGITSLGGIYYYQYGGAYSGFDGADGERAQQLDVQFYQLKLPTVTAAMAYSGALMTFSCLTLLAGALRVPWHCPLWLVIEGLMDALIAGAYVPGLYFFFQHLSAAYSSDVCKERETLYQSKGYSGFNCGVHGGDIGAGVFAAMAIGVFAVGAVLAFRGYRKVKKLKEKPTEMLEF.

The span at 1–95 (MKNTSGHREP…EKSRQSRARP (95 aa)) shows a compositional bias: basic and acidic residues. Positions 1–134 (MKNTSGHREP…GRRGLESERA (134 aa)) are disordered. Residues 1–173 (MKNTSGHREP…HKCRYLCTGR (173 aa)) lie on the Cytoplasmic side of the membrane. Positions 168–361 (YLCTGRACWQ…GAVLAFRGYR (194 aa)) constitute an MARVEL domain. The helical transmembrane segment at 174–194 (ACWQMLKALLNLLILACSSVS) threads the bilayer. At 195–247 (YNSTGGYTGITSLGGIYYYQYGGAYSGFDGADGERAQQLDVQFYQLKLPTVTA) the chain is on the extracellular side. The helical transmembrane segment at 248–268 (AMAYSGALMTFSCLTLLAGAL) threads the bilayer. Residues 269–275 (RVPWHCP) are Cytoplasmic-facing. Residues 276–296 (LWLVIEGLMDALIAGAYVPGL) traverse the membrane as a helical segment. The Extracellular segment spans residues 297–335 (YFFFQHLSAAYSSDVCKERETLYQSKGYSGFNCGVHGGD). The helical transmembrane segment at 336–356 (IGAGVFAAMAIGVFAVGAVLA) threads the bilayer. Topologically, residues 357-376 (FRGYRKVKKLKEKPTEMLEF) are cytoplasmic.

Widely expressed with highest levels in small intestine, colon, stomach and lung. Liver expresses only isoform 2.

The protein resides in the membrane. The protein localises to the cell junction. It is found in the tight junction. Functionally, as a component of tight junctions, plays a role in paracellular ion conductivity. The protein is MARVEL domain-containing protein 3 (Marveld3) of Mus musculus (Mouse).